The following is a 142-amino-acid chain: Hemoglobin subunit alpha (142 aa).

Residues 2-142 enclose the Globin domain; that stretch reads VLSAADKNNV…VSTVLTSKYR (141 aa). A Phosphoserine modification is found at S4. An N6-succinyllysine mark is found at K8 and K12. K17 bears the N6-acetyllysine; alternate mark. At K17 the chain carries N6-succinyllysine; alternate. At Y25 the chain carries Phosphotyrosine. At S36 the chain carries Phosphoserine. N6-succinyllysine is present on K41. Position 50 is a phosphoserine (S50). H59 is an O2 binding site. H88 lines the heme b pocket. T109 is modified (phosphothreonine). A phosphoserine mark is found at S125 and S132. A phosphothreonine mark is found at T135 and T138. Residue S139 is modified to Phosphoserine.

Belongs to the globin family. As to quaternary structure, heterotetramer of two alpha chains and two beta chains. In terms of tissue distribution, red blood cells.

Functionally, involved in oxygen transport from the lung to the various peripheral tissues. In terms of biological role, hemopressin acts as an antagonist peptide of the cannabinoid receptor CNR1. Hemopressin-binding efficiently blocks cannabinoid receptor CNR1 and subsequent signaling. This Cavia porcellus (Guinea pig) protein is Hemoglobin subunit alpha (HBA).